The chain runs to 414 residues: WW domain-containing oxidoreductase (414 aa).

Residues 1 to 24 form a disordered region; that stretch reads MAALRYAGLDDTDSEDELPPGWEE. A Phosphothreonine modification is found at Thr12. Ser14 bears the Phosphoserine mark. One can recognise a WW 1 domain in the interval 16 to 49; the sequence is DELPPGWEERTTKDGWVYYANHTEEKTQWEHPKT. A Phosphotyrosine modification is found at Tyr33. The short motif at 50–55 is the Nuclear localization signal element; it reads GKRKRV. The WW 2 domain occupies 57–90; sequence GDLPYGWEQGTDENGQVFFVDHINKRTTYLDPRL. The tract at residues 125 to 414 is interaction with MAPT; the sequence is KVVVVTGANS…IQERLGSQSG (290 aa). 131 to 137 contacts NADP(+); it reads GANSGIG. The segment at 209 to 273 is mediates targeting to the mitochondria; sequence CNAATFALPW…RFTDINDSLG (65 aa). Residue Ser260 participates in substrate binding. Residue Tyr287 is modified to Phosphotyrosine; by TNK2. Residue Tyr293 is the Proton acceptor of the active site.

The protein belongs to the short-chain dehydrogenases/reductases (SDR) family. In terms of assembly, interacts with TP53, p73/TP73 and MAPK8. Interacts with MAPT/TAU, RUNX2 and HYAL2. Forms a ternary complex with TP53 and MDM2. Interacts with ERBB4, LITAF and WBP1. Interacts with DVL1, DVL2 and DVL3. May interact with FAM189B and SCOTIN. Interacts with TNK2. Interacts with TMEM207. Interacts (via WW domain) with VOPP1. In terms of processing, phosphorylated upon genotoxic stress. Phosphorylation of Tyr-33 regulates interaction with TP53, TP73 and MAPK8. May also regulate proapoptotic activity. Phosphorylation by TNK2 is associated with polyubiquitination and degradation. Post-translationally, ubiquitinated when phosphorylated by TNK2, leading to its degradation.

The protein localises to the cytoplasm. It is found in the nucleus. It localises to the mitochondrion. The protein resides in the golgi apparatus. Its subcellular location is the lysosome. Functionally, putative oxidoreductase. Acts as a tumor suppressor and plays a role in apoptosis. May function synergistically with p53/TP53 to control genotoxic stress-induced cell death. Plays a role in TGFB1 signaling and TGFB1-mediated cell death. May also play a role in tumor necrosis factor (TNF)-mediated cell death. Required for normal bone development. Inhibits Wnt signaling, probably by sequestering DVL2 in the cytoplasm. This Pongo abelii (Sumatran orangutan) protein is WW domain-containing oxidoreductase (WWOX).